The sequence spans 143 residues: MIIPDINLLLYAVITGFPQHRRAHAWWQDTVNGHTRIGLTYPALFGFLRIATSARVLAAPLPTADAIAYVREWLSQPNVDLLTAGPRHLDIALGLLDKLGTASHLTTDVQLAAYGIEYDAEIHSSDTDFARFADLKWTDPLRE.

Mg(2+)-binding residues include aspartate 5 and aspartate 108.

This sequence belongs to the PINc/VapC protein family. Requires Mg(2+) as cofactor.

Functionally, toxic component of a type II toxin-antitoxin (TA) system. An RNase. Its toxic effect is neutralized by coexpression with cognate antitoxin VapB33. This Mycobacterium tuberculosis (strain CDC 1551 / Oshkosh) protein is Ribonuclease VapC33.